The sequence spans 357 residues: Membrane-bound lytic murein transglycosylase C (357 aa).

Positions Met1–Ser16 are cleaved as a signal peptide. Cys17 carries N-palmitoyl cysteine lipidation. Cys17 is lipidated: S-diacylglycerol cysteine.

It belongs to the transglycosylase Slt family.

The protein resides in the cell outer membrane. It catalyses the reaction Exolytic cleavage of the (1-&gt;4)-beta-glycosidic linkage between N-acetylmuramic acid (MurNAc) and N-acetylglucosamine (GlcNAc) residues in peptidoglycan, from either the reducing or the non-reducing ends of the peptidoglycan chains, with concomitant formation of a 1,6-anhydrobond in the MurNAc residue.. In terms of biological role, murein-degrading enzyme. May play a role in recycling of muropeptides during cell elongation and/or cell division. In Sodalis glossinidius (strain morsitans), this protein is Membrane-bound lytic murein transglycosylase C.